Consider the following 505-residue polypeptide: ATP synthase subunit alpha (505 aa).

170-177 contributes to the ATP binding site; sequence GDRQTGKT.

It belongs to the ATPase alpha/beta chains family. F-type ATPases have 2 components, CF(1) - the catalytic core - and CF(0) - the membrane proton channel. CF(1) has five subunits: alpha(3), beta(3), gamma(1), delta(1), epsilon(1). CF(0) has four main subunits: a(1), b(1), b'(1) and c(9-12).

The protein localises to the cellular thylakoid membrane. The enzyme catalyses ATP + H2O + 4 H(+)(in) = ADP + phosphate + 5 H(+)(out). Produces ATP from ADP in the presence of a proton gradient across the membrane. The alpha chain is a regulatory subunit. This is ATP synthase subunit alpha from Prochlorococcus marinus (strain MIT 9303).